The primary structure comprises 607 residues: Guanine nucleotide-binding protein-like 1 (607 aa).

Basic residues predominate over residues 1 to 14 (MPRKKPFSVKQKKK). The segment at 1–81 (MPRKKPFSVK…GPRGYDPNRY (81 aa)) is disordered. Over residues 15–26 (QLQDKRERKRGL) the composition is skewed to basic and acidic residues. Residues S32, S33, and S34 each carry the phosphoserine modification. Phosphothreonine is present on residues T48 and T50. Phosphoserine is present on residues S51 and S68. The CP-type G domain maps to 178–418 (WRQLWRVLEM…LCDCPGLIFP (241 aa)). 225–228 (NKVD) contributes to the GTP binding site. The residue at position 324 (S324) is a Phosphoserine. GTP-binding positions include 367 to 374 (GFPNVGKS) and 411 to 415 (DCPGL). Positions 547–607 (GPAGDEEEEE…PYALLGEDEC (61 aa)) are disordered. A compositionally biased stretch (acidic residues) spans 550–584 (GDEEEEEEEELSSSCEEEGEEDRDADEEGEGDEET). 3 positions are modified to phosphoserine: S561, S562, and S563.

This sequence belongs to the TRAFAC class YlqF/YawG GTPase family.

Functionally, possible regulatory or functional link with the histocompatibility cluster. The protein is Guanine nucleotide-binding protein-like 1 (GNL1) of Homo sapiens (Human).